Here is a 198-residue protein sequence, read N- to C-terminus: Recombination protein RecR (198 aa).

The C4-type zinc finger occupies 57–72 (CSVCGHITDQDPCYIC). A Toprim domain is found at 80 to 175 (SVICVVQDPK…KLSRIAHGLP (96 aa)).

It belongs to the RecR family.

In terms of biological role, may play a role in DNA repair. It seems to be involved in an RecBC-independent recombinational process of DNA repair. It may act with RecF and RecO. This is Recombination protein RecR from Bacillus subtilis (strain 168).